A 322-amino-acid chain; its full sequence is Ribonucleoside-diphosphate reductase small subunit (322 aa).

Residues Asp70, Glu101, and His104 each coordinate Fe cation. Tyr108 is a catalytic residue. 3 residues coordinate Fe cation: Glu163, Glu197, and His200.

Belongs to the ribonucleoside diphosphate reductase small chain family. In terms of assembly, heterodimer of a large and a small subunit. It depends on Fe cation as a cofactor.

The catalysed reaction is a 2'-deoxyribonucleoside 5'-diphosphate + [thioredoxin]-disulfide + H2O = a ribonucleoside 5'-diphosphate + [thioredoxin]-dithiol. Functionally, provides the precursors necessary for DNA synthesis. Catalyzes the biosynthesis of deoxyribonucleotides from the corresponding ribonucleotides. This is Ribonucleoside-diphosphate reductase small subunit (RNR2) from Plasmodium falciparum (isolate FCR-3 / Gambia).